Reading from the N-terminus, the 620-residue chain is MKKQVKNIKKQKAQNQTKNIKKQLKEEVNTGLIDGIFVYTEPLSVIEFATKINKPLTAILKHYFNQGLLLNQNTLLTEEQMGELCLEFGFDFKKETTVTKENILQTLLETVDDEKHLKERPPIVTIMGHVDHGKTTLLDSIKNSNVVASEAGGITQAIGAYQITTNHNKKITFIDTPGHEAFTEMRSRGANVTDIVVLIVAADDGVMPQTEEAIDHAKLANVPIIVFINKIDKPEADPNRVKTELMKYGLVAEEFGGDIPFIEGSAIKKINLDKLQDTIILISELENLKANPDKFASGVVLEAHLDKAKGPVASVLVQQGTLEIKDIMIAGTTFGSIKHIEDEFKHKVLKAEPSKPVVVYGLNQVPKAGDKFVVINDEKMAREISEAQLKKQQEEERRTKQAFTLDAIKQHIDEGELKNITLIIKADTQGSVEALKNSLSKINISGVKINIIRASVGAISLSDISLASTVRDGLVIVYGFNVRPDAIVRKKAEEDHIEIKLHNIIYKVIEELEDAAKGILDPEVKELVLGQAQVRALFRHSAIGTIGGFYVLDGIIPRNAKIRVIRNGVVVYDGEINSLQHQKQDAKEIKAGFEGGLTIKNFNDIKEEDIFEAYKIEQIK.

One can recognise a tr-type G domain in the interval 119–288; sequence ERPPIVTIMG…IILISELENL (170 aa). A G1 region spans residues 128 to 135; it reads GHVDHGKT. GTP is bound at residue 128 to 135; that stretch reads GHVDHGKT. A G2 region spans residues 153 to 157; it reads GITQA. The G3 stretch occupies residues 175–178; sequence DTPG. Residues 175 to 179 and 229 to 232 each bind GTP; these read DTPGH and NKID. Residues 229–232 are G4; that stretch reads NKID. The interval 265-267 is G5; the sequence is SAI.

It belongs to the TRAFAC class translation factor GTPase superfamily. Classic translation factor GTPase family. IF-2 subfamily.

The protein localises to the cytoplasm. Functionally, one of the essential components for the initiation of protein synthesis. Protects formylmethionyl-tRNA from spontaneous hydrolysis and promotes its binding to the 30S ribosomal subunits. Also involved in the hydrolysis of GTP during the formation of the 70S ribosomal complex. The chain is Translation initiation factor IF-2 from Mycoplasma mycoides subsp. mycoides SC (strain CCUG 32753 / NCTC 10114 / PG1).